We begin with the raw amino-acid sequence, 144 residues long: Acidic phospholipase A2 S15-109 (144 aa).

The first 19 residues, 1-19 (MYPAHLLVLLAVCVSLLGA), serve as a signal peptide directing secretion. Residues 20 to 27 (SDIPPQPL) constitute a propeptide that is removed on maturation. 7 cysteine pairs are disulfide-bonded: C38/C98, C54/C143, C56/C72, C71/C126, C78/C119, C87/C112, and C105/C117. Ca(2+) is bound by residues Y55, G57, and G59. H75 is a catalytic residue. D76 lines the Ca(2+) pocket. D120 is a catalytic residue.

This sequence belongs to the phospholipase A2 family. Group I subfamily. D49 sub-subfamily. The cofactor is Ca(2+). Expressed by the venom gland.

The protein resides in the secreted. It carries out the reaction a 1,2-diacyl-sn-glycero-3-phosphocholine + H2O = a 1-acyl-sn-glycero-3-phosphocholine + a fatty acid + H(+). In terms of biological role, snake venom phospholipase A2 (PLA2) that inhibits collagen-induced platelet aggregation. PLA2 catalyzes the calcium-dependent hydrolysis of the 2-acyl groups in 3-sn-phosphoglycerides. This chain is Acidic phospholipase A2 S15-109, found in Austrelaps superbus (Lowland copperhead snake).